Reading from the N-terminus, the 181-residue chain is Acireductone dioxygenase (181 aa).

Fe(2+) contacts are provided by His-98, His-100, Glu-104, and His-142. 4 residues coordinate Ni(2+): His-98, His-100, Glu-104, and His-142.

It belongs to the acireductone dioxygenase (ARD) family. Monomer. The cofactor is Fe(2+). Requires Ni(2+) as cofactor.

It carries out the reaction 1,2-dihydroxy-5-(methylsulfanyl)pent-1-en-3-one + O2 = 3-(methylsulfanyl)propanoate + CO + formate + 2 H(+). The catalysed reaction is 1,2-dihydroxy-5-(methylsulfanyl)pent-1-en-3-one + O2 = 4-methylsulfanyl-2-oxobutanoate + formate + 2 H(+). Its pathway is amino-acid biosynthesis; L-methionine biosynthesis via salvage pathway; L-methionine from S-methyl-5-thio-alpha-D-ribose 1-phosphate: step 5/6. Catalyzes 2 different reactions between oxygen and the acireductone 1,2-dihydroxy-3-keto-5-methylthiopentene (DHK-MTPene) depending upon the metal bound in the active site. Fe-containing acireductone dioxygenase (Fe-ARD) produces formate and 2-keto-4-methylthiobutyrate (KMTB), the alpha-ketoacid precursor of methionine in the methionine recycle pathway. Ni-containing acireductone dioxygenase (Ni-ARD) produces methylthiopropionate, carbon monoxide and formate, and does not lie on the methionine recycle pathway. The sequence is that of Acireductone dioxygenase from Alcanivorax borkumensis (strain ATCC 700651 / DSM 11573 / NCIMB 13689 / SK2).